A 486-amino-acid polypeptide reads, in one-letter code: Aspartyl/glutamyl-tRNA(Asn/Gln) amidotransferase subunit B (486 aa).

It belongs to the GatB/GatE family. GatB subfamily. Heterotrimer of A, B and C subunits.

The catalysed reaction is L-glutamyl-tRNA(Gln) + L-glutamine + ATP + H2O = L-glutaminyl-tRNA(Gln) + L-glutamate + ADP + phosphate + H(+). It carries out the reaction L-aspartyl-tRNA(Asn) + L-glutamine + ATP + H2O = L-asparaginyl-tRNA(Asn) + L-glutamate + ADP + phosphate + 2 H(+). Its function is as follows. Allows the formation of correctly charged Asn-tRNA(Asn) or Gln-tRNA(Gln) through the transamidation of misacylated Asp-tRNA(Asn) or Glu-tRNA(Gln) in organisms which lack either or both of asparaginyl-tRNA or glutaminyl-tRNA synthetases. The reaction takes place in the presence of glutamine and ATP through an activated phospho-Asp-tRNA(Asn) or phospho-Glu-tRNA(Gln). The chain is Aspartyl/glutamyl-tRNA(Asn/Gln) amidotransferase subunit B from Orientia tsutsugamushi (strain Boryong) (Rickettsia tsutsugamushi).